A 419-amino-acid polypeptide reads, in one-letter code: Gamma-glutamyl phosphate reductase (419 aa).

Belongs to the gamma-glutamyl phosphate reductase family.

The protein resides in the cytoplasm. The catalysed reaction is L-glutamate 5-semialdehyde + phosphate + NADP(+) = L-glutamyl 5-phosphate + NADPH + H(+). It participates in amino-acid biosynthesis; L-proline biosynthesis; L-glutamate 5-semialdehyde from L-glutamate: step 2/2. Catalyzes the NADPH-dependent reduction of L-glutamate 5-phosphate into L-glutamate 5-semialdehyde and phosphate. The product spontaneously undergoes cyclization to form 1-pyrroline-5-carboxylate. The chain is Gamma-glutamyl phosphate reductase from Bordetella parapertussis (strain 12822 / ATCC BAA-587 / NCTC 13253).